The following is a 138-amino-acid chain: Large ribosomal subunit protein uL16c (138 aa).

The protein belongs to the universal ribosomal protein uL16 family. Part of the 50S ribosomal subunit.

The protein resides in the plastid. Its subcellular location is the chloroplast. The sequence is that of Large ribosomal subunit protein uL16c from Phaeodactylum tricornutum (strain CCAP 1055/1).